Here is a 520-residue protein sequence, read N- to C-terminus: Hydroxymethylglutaryl-CoA synthase, cytoplasmic (520 aa).

Phosphoserine is present on S4. 2 residues coordinate (3S)-3-hydroxy-3-methylglutaryl-CoA: D43 and A44. 44–46 lines the CoA pocket; the sequence is AGK. K46 carries the N6-acetyllysine modification. Residue E95 is the Proton donor/acceptor of the active site. Residues C129, N167, T171, S221, and H264 each contribute to the (3S)-3-hydroxy-3-methylglutaryl-CoA site. C129 serves as the catalytic Acyl-thioester intermediate. A CoA-binding site is contributed by N167. S221 is a binding site for CoA. Catalysis depends on H264, which acts as the Proton donor/acceptor. Positions 269 and 273 each coordinate CoA. The (3S)-3-hydroxy-3-methylglutaryl-CoA site is built by K273, N343, and S377. K273 carries the N6-acetyllysine modification. Residues 488–520 form a disordered region; that stretch reads TATEHIPSPAKKVPRLPATSAESESAVISNGEH. S495 and S516 each carry phosphoserine. Over residues 507-520 the composition is skewed to polar residues; the sequence is SAESESAVISNGEH.

This sequence belongs to the thiolase-like superfamily. HMG-CoA synthase family. Homodimer.

It localises to the cytoplasm. The enzyme catalyses acetoacetyl-CoA + acetyl-CoA + H2O = (3S)-3-hydroxy-3-methylglutaryl-CoA + CoA + H(+). The protein operates within metabolic intermediate biosynthesis; (R)-mevalonate biosynthesis; (R)-mevalonate from acetyl-CoA: step 2/3. Functionally, catalyzes the condensation of acetyl-CoA with acetoacetyl-CoA to form HMG-CoA, which is converted by HMG-CoA reductase (HMGCR) into mevalonate, a precursor for cholesterol synthesis. This chain is Hydroxymethylglutaryl-CoA synthase, cytoplasmic, found in Mus musculus (Mouse).